A 317-amino-acid chain; its full sequence is Adenine deaminase (317 aa).

Positions 14, 16, and 194 each coordinate Zn(2+). Glutamate 197 serves as the catalytic Proton donor. Residue aspartate 275 coordinates Zn(2+). Aspartate 276 contributes to the substrate binding site.

The protein belongs to the metallo-dependent hydrolases superfamily. Adenosine and AMP deaminases family. Adenine deaminase type 2 subfamily. It depends on Zn(2+) as a cofactor.

It catalyses the reaction adenine + H2O + H(+) = hypoxanthine + NH4(+). Functionally, catalyzes the hydrolytic deamination of adenine to hypoxanthine. Plays an important role in the purine salvage pathway and in nitrogen catabolism. In Pseudomonas savastanoi pv. phaseolicola (strain 1448A / Race 6) (Pseudomonas syringae pv. phaseolicola (strain 1448A / Race 6)), this protein is Adenine deaminase.